Consider the following 365-residue polypeptide: Heme A synthase (365 aa).

A run of 8 helical transmembrane segments spans residues 17–37 (AVRI…LVGG), 107–127 (VIGI…AIGP), 132–152 (ALWG…WMVA), 164–184 (VRLA…VWTL), 203–223 (AIAL…VAGL), 264–283 (QFDH…WHAI), 296–316 (GALW…LTVL), and 320–340 (PIGL…LAVL). Heme is bound at residue H267. H327 provides a ligand contact to heme.

Belongs to the COX15/CtaA family. Type 2 subfamily. Interacts with CtaB. Heme b is required as a cofactor.

It localises to the cell membrane. The enzyme catalyses Fe(II)-heme o + 2 A + H2O = Fe(II)-heme a + 2 AH2. It participates in porphyrin-containing compound metabolism; heme A biosynthesis; heme A from heme O: step 1/1. Its function is as follows. Catalyzes the conversion of heme O to heme A by two successive hydroxylations of the methyl group at C8. The first hydroxylation forms heme I, the second hydroxylation results in an unstable dihydroxymethyl group, which spontaneously dehydrates, resulting in the formyl group of heme A. This chain is Heme A synthase, found in Rhodopseudomonas palustris (strain HaA2).